The sequence spans 533 residues: WUSCHEL-related homeobox 7 (533 aa).

Disordered stretches follow at residues 1-74 (MASS…NPRP) and 125-212 (SKNK…STQA). Low complexity predominate over residues 28–41 (AGSPPSLLSGSSAG). Residues 59-68 (GEERVPDPKP) are compositionally biased toward basic and acidic residues. Positions 65–129 (DPKPRWNPRP…NRKSRSKNKL (65 aa)) form a DNA-binding region, homeobox; WUS-type. Residues 132 to 143 (GGTGRAGLGLGG) show a composition bias toward gly residues. Positions 161 to 174 (FTPPPPILPAPQPV) are enriched in pro residues. Positions 175–202 (QPQQQLVSPVAAPTSSSSSSSDRSSGSS) are enriched in low complexity.

Belongs to the WUS homeobox family.

Its subcellular location is the nucleus. In terms of biological role, transcription factor which may be involved in developmental processes. This is WUSCHEL-related homeobox 7 (WOX7) from Oryza sativa subsp. japonica (Rice).